The following is a 1342-amino-acid chain: DNA-directed RNA polymerase subunit beta (1342 aa).

It belongs to the RNA polymerase beta chain family. As to quaternary structure, the RNAP catalytic core consists of 2 alpha, 1 beta, 1 beta' and 1 omega subunit. When a sigma factor is associated with the core the holoenzyme is formed, which can initiate transcription.

It carries out the reaction RNA(n) + a ribonucleoside 5'-triphosphate = RNA(n+1) + diphosphate. Functionally, DNA-dependent RNA polymerase catalyzes the transcription of DNA into RNA using the four ribonucleoside triphosphates as substrates. In Buchnera aphidicola subsp. Acyrthosiphon pisum (strain Tuc7), this protein is DNA-directed RNA polymerase subunit beta.